Consider the following 1240-residue polypeptide: ABC transporter B family member 17 (1240 aa).

An ABC transmembrane type-1 1 domain is found at 35 to 324 (MALGLIGAVG…SLSNLKYFSE (290 aa)). A helical transmembrane segment spans residues 36–56 (ALGLIGAVGDGFITPVVVFIF). N-linked (GlcNAc...) asparagine glycosylation occurs at asparagine 70. The next 5 helical transmembrane spans lie at 81-101 (VVALLYVACGSWVICFLEGYC), 158-180 (LPNFLMNASAFVASYIVSFILMW), 184-206 (IVGFPFIILLLVPGLMYGRALVS), 264-284 (GITIGSNGVTHAIWAFLTWYG), and 296-316 (GTVFVVISCITYGGVSLGQSL). Positions 359 to 595 (VEFNHVKFTY…IDGQYTSLVS (237 aa)) constitute an ABC transporter 1 domain. An ATP-binding site is contributed by 394 to 401 (GGSGSGKS). N-linked (GlcNAc...) asparagine glycans are attached at residues asparagine 542, asparagine 609, and asparagine 642. Residues 672–960 (ALYGCLSAAL…AGTMTTDLAR (289 aa)) form the ABC transmembrane type-1 2 domain. Helical transmembrane passes span 681-701 (LVGVLQPVSAYSAGSVISVFF) and 714-734 (IYVLLFVGLAIFSFLVNISQH). Residue asparagine 769 is glycosylated (N-linked (GlcNAc...) asparagine). 4 helical membrane-spanning segments follow: residues 793–815 (MSLLVQTISAVIIACIIGLVIAW), 817–839 (LAIVMISVQPLIVVCFYTQRVLL), 896–919 (WLAGIVLGTSRSLITCTSALNFWY), and 923–943 (LIADGKIVSKAFFEIFLIFVT). The ABC transporter 2 domain maps to 995–1233 (ITFLNVDFAY…GPTGTYFSLA (239 aa)). N-linked (GlcNAc...) asparagine glycosylation occurs at asparagine 1015. 1030–1037 (GTSGSGKS) contributes to the ATP binding site.

It belongs to the ABC transporter superfamily. ABCB family. Multidrug resistance exporter (TC 3.A.1.201) subfamily.

The protein localises to the membrane. The sequence is that of ABC transporter B family member 17 (ABCB17) from Arabidopsis thaliana (Mouse-ear cress).